A 176-amino-acid polypeptide reads, in one-letter code: Large ribosomal subunit protein bL17m (176 aa).

The N-terminal 8 residues, 1–8 (MRLSLAAA), are a transit peptide targeting the mitochondrion.

Belongs to the bacterial ribosomal protein bL17 family. In terms of assembly, component of the mitochondrial ribosome large subunit (39S) which comprises a 16S rRNA and about 50 distinct proteins.

It localises to the mitochondrion. This Rattus norvegicus (Rat) protein is Large ribosomal subunit protein bL17m (Mrpl17).